The chain runs to 321 residues: Pirin-like protein 2 (321 aa).

Fe cation contacts are provided by His88, His90, His132, and Glu134.

This sequence belongs to the pirin family. In terms of assembly, interacts with RD21A, RD21B and XCP2.

It is found in the cytoplasm. It localises to the cytosol. The protein localises to the nucleus. Involved in susceptibility to the bacterial plant pathogen Ralstonia solanacearum. Stabilizes the xylem cysteine protease XCP2 by blocking its autolysis. The chain is Pirin-like protein 2 from Arabidopsis thaliana (Mouse-ear cress).